The following is a 119-amino-acid chain: MAEHNDLGKFGEDLSVEFLQKKGYSILETNWTFQKAEIDIIAQKENILVIVEVKTRSSIDFGSPQDFVKPAKIQLLVKAVNEYVISNDLDLEIRFDIIAVYKERKEFKIEHFEDAFYHF.

The protein belongs to the UPF0102 family.

This Flavobacterium psychrophilum (strain ATCC 49511 / DSM 21280 / CIP 103535 / JIP02/86) protein is UPF0102 protein FP2501.